Consider the following 394-residue polypeptide: Elongation factor Tu (394 aa).

The tr-type G domain maps to 10 to 204 (KPHLNVGTIG…ALDTYIPLPE (195 aa)). The segment at 19–26 (GHVDHGKT) is G1. 19–26 (GHVDHGKT) contributes to the GTP binding site. T26 contacts Mg(2+). The G2 stretch occupies residues 60–64 (GITIN). The interval 81 to 84 (DCPG) is G3. GTP-binding positions include 81 to 85 (DCPGH) and 136 to 139 (NKCD). The G4 stretch occupies residues 136 to 139 (NKCD). The G5 stretch occupies residues 174 to 176 (SAL).

The protein belongs to the TRAFAC class translation factor GTPase superfamily. Classic translation factor GTPase family. EF-Tu/EF-1A subfamily. As to quaternary structure, monomer.

Its subcellular location is the cytoplasm. The catalysed reaction is GTP + H2O = GDP + phosphate + H(+). In terms of biological role, GTP hydrolase that promotes the GTP-dependent binding of aminoacyl-tRNA to the A-site of ribosomes during protein biosynthesis. This Psychromonas ingrahamii (strain DSM 17664 / CCUG 51855 / 37) protein is Elongation factor Tu.